A 1004-amino-acid polypeptide reads, in one-letter code: Protein Wnt-5 (1004 aa).

The signal sequence occupies residues 1–29 (MSCYRKRHFLLWLLRAVCMLHLTARGAYA). Asn-60, Asn-66, Asn-115, and Asn-219 each carry an N-linked (GlcNAc...) asparagine glycan. Residues 238 to 298 (QKDKAKTSGA…NPGEQPIGGY (61 aa)) form a disordered region. Asn-307 and Asn-341 each carry an N-linked (GlcNAc...) asparagine glycan. The segment at 310-407 (LLKPTDTDSH…ERDEWFRGQS (98 aa)) is disordered. Residues 389 to 403 (RREEQQRQRERDEWF) show a composition bias toward basic and acidic residues. The N-linked (GlcNAc...) asparagine glycan is linked to Asn-422. Residues 438–472 (KVSSEGSDGELLSRVERSQPSISSSSSSSSSSSRK) form a disordered region. The segment covering 458–470 (SISSSSSSSSSSS) has biased composition (low complexity). 4 N-linked (GlcNAc...) asparagine glycosylation sites follow: Asn-484, Asn-485, Asn-528, and Asn-593. 3 cysteine pairs are disulfide-bonded: Cys-583–Cys-594, Cys-633–Cys-641, and Cys-643–Cys-661. The N-linked (GlcNAc...) asparagine glycan is linked to Asn-724. The tract at residues 790-822 (FFKGEQQPRKKKRKNQRAAADAPAYPRNGIKES) is disordered. 8 cysteine pairs are disulfide-bonded: Cys-862/Cys-876, Cys-864/Cys-871, Cys-933/Cys-964, Cys-949/Cys-959, Cys-963/Cys-1003, Cys-979/Cys-994, Cys-981/Cys-991, and Cys-986/Cys-987. Ser-868 carries O-palmitoleoyl serine; by PORCN lipidation. An N-linked (GlcNAc...) asparagine glycan is attached at Asn-952.

The protein belongs to the Wnt family. Interacts with porcupine (por). Glycosylated, glycosylation is stimulated by porcupine at the ER. Post-translationally, palmitoleoylated by porcupine. The lipid group functions as a sorting signal, targeting the ligand to polarized vesicles that transport Wnt5 to unique sites at the cell surface. Depalmitoleoylated by notum, leading to inhibit Wnt signaling pathway. As to expression, dynamic expression pattern during embryogenesis. Expression is seen in the limb primordia of the head and thoracic segments, mesodermal and neurogenic regions.

It localises to the secreted. It is found in the extracellular space. The protein resides in the extracellular matrix. Its function is as follows. Binds as a ligand to a family of frizzled seven-transmembrane receptors and acts through a cascade of genes on the nucleus. Probable developmental protein. May be a signaling molecule which affects the development of discrete regions of tissues. Is likely to signal over only few cell diameters. May have a role in limb and CNS development; may be a downstream target of Dll that acts in the specification of these primordia. In Drosophila melanogaster (Fruit fly), this protein is Protein Wnt-5 (Wnt5).